The sequence spans 356 residues: Histidinol-phosphate aminotransferase (356 aa).

Lysine 214 is subject to N6-(pyridoxal phosphate)lysine.

Belongs to the class-II pyridoxal-phosphate-dependent aminotransferase family. Histidinol-phosphate aminotransferase subfamily. As to quaternary structure, homodimer. Requires pyridoxal 5'-phosphate as cofactor.

The enzyme catalyses L-histidinol phosphate + 2-oxoglutarate = 3-(imidazol-4-yl)-2-oxopropyl phosphate + L-glutamate. It functions in the pathway amino-acid biosynthesis; L-histidine biosynthesis; L-histidine from 5-phospho-alpha-D-ribose 1-diphosphate: step 7/9. In Escherichia fergusonii (strain ATCC 35469 / DSM 13698 / CCUG 18766 / IAM 14443 / JCM 21226 / LMG 7866 / NBRC 102419 / NCTC 12128 / CDC 0568-73), this protein is Histidinol-phosphate aminotransferase.